The chain runs to 149 residues: Probable flagellum biosynthesis repressor protein FlbT (149 aa).

This sequence belongs to the FlbT family.

Its function is as follows. Has a post-transcriptional repressor function in flagellum biogenesis. Associates with the 5'-UTR of fljK mRNA and promotes its degradation. The chain is Probable flagellum biosynthesis repressor protein FlbT from Allorhizobium ampelinum (strain ATCC BAA-846 / DSM 112012 / S4) (Agrobacterium vitis (strain S4)).